The chain runs to 407 residues: MASKGREGEHPSVTLFRQYLRIRTVQPEPDYGAAVAFLEERARQLGLGCQKVEVVPGHVVTVLTWPGTNPTLSSILLNSHTDVVPVFKEHWSHDPFEGFKDADGYIYGRGAQDMKCVSIQYLEAVRRLKVEGHHFPRTIHMTFVPDEEVGGHQGMELFVKRPEFQALRAGFALDEGLASPTDAFTVFYSERSPWWLRVTSTGKPGHGSRFIEDTAAEKLHKVINSILAFREKEKQRLQSNQLKPGAVTSVNLTMLEGGVAYNVVPATMSACFDFRVAPDVDLKAFEEQLQSWCQAAGEGVTFEFVQKWMETQVTSTDDSDPWWAAFSGVFKDMKLALELEICPASTDARYIRAAGVPALGFSPMNHTPVLLHDHDERLHEAVFLRGVDIYTQLLSALASVPALPSES.

An N-acetylalanine modification is found at Ala2. Residue His80 participates in Zn(2+) binding. Asp82 is an active-site residue. Asp113 contributes to the Zn(2+) binding site. Glu147 acts as the Proton acceptor in catalysis. Zn(2+) contacts are provided by Glu148, Glu175, and His372.

It belongs to the peptidase M20A family. In terms of assembly, homodimer. Interacts with SPHK1. It depends on Zn(2+) as a cofactor.

It localises to the cytoplasm. It carries out the reaction an N-acyl-L-amino acid + H2O = an L-alpha-amino acid + a carboxylate. The enzyme catalyses N-acetyl-L-methionine + H2O = L-methionine + acetate. The catalysed reaction is N-acetyl-L-glutamine + H2O = L-glutamine + acetate. Its function is as follows. Catalyzes the hydrolysis of N-acetylated amino acids to acetate and free amino acids. The protein is Aminoacylase-1 (ACY1) of Sus scrofa (Pig).